We begin with the raw amino-acid sequence, 229 residues long: Phosphoglycolate phosphatase (229 aa).

Asp-13 (nucleophile) is an active-site residue. Mg(2+) contacts are provided by Asp-13, Asp-15, and Asp-178.

Belongs to the HAD-like hydrolase superfamily. CbbY/CbbZ/Gph/YieH family. The cofactor is Mg(2+).

The catalysed reaction is 2-phosphoglycolate + H2O = glycolate + phosphate. Its pathway is organic acid metabolism; glycolate biosynthesis; glycolate from 2-phosphoglycolate: step 1/1. Functionally, specifically catalyzes the dephosphorylation of 2-phosphoglycolate. Is involved in the dissimilation of the intracellular 2-phosphoglycolate formed during the DNA repair of 3'-phosphoglycolate ends, a major class of DNA lesions induced by oxidative stress. The sequence is that of Phosphoglycolate phosphatase from Photobacterium profundum (strain SS9).